The following is a 321-amino-acid chain: Acetyl-coenzyme A carboxylase carboxyl transferase subunit beta, chloroplastic (321 aa).

The 275-residue stretch at 47-321 folds into the CoA carboxyltransferase N-terminal domain; that stretch reads LWAQCDNCEN…FWFYVLRSSL (275 aa). The Zn(2+) site is built by Cys-51, Cys-54, Cys-70, and Cys-73. A C4-type zinc finger spans residues 51–73; it reads CDNCENLLYLRFLRENQSVCKEC.

It belongs to the AccD/PCCB family. Acetyl-CoA carboxylase is a heterohexamer composed of biotin carboxyl carrier protein, biotin carboxylase and 2 subunits each of ACCase subunit alpha and ACCase plastid-coded subunit beta (accD). Zn(2+) serves as cofactor.

The protein resides in the plastid. The protein localises to the chloroplast stroma. The catalysed reaction is N(6)-carboxybiotinyl-L-lysyl-[protein] + acetyl-CoA = N(6)-biotinyl-L-lysyl-[protein] + malonyl-CoA. It functions in the pathway lipid metabolism; malonyl-CoA biosynthesis; malonyl-CoA from acetyl-CoA: step 1/1. In terms of biological role, component of the acetyl coenzyme A carboxylase (ACC) complex. Biotin carboxylase (BC) catalyzes the carboxylation of biotin on its carrier protein (BCCP) and then the CO(2) group is transferred by the transcarboxylase to acetyl-CoA to form malonyl-CoA. This is Acetyl-coenzyme A carboxylase carboxyl transferase subunit beta, chloroplastic from Pinus thunbergii (Japanese black pine).